A 402-amino-acid polypeptide reads, in one-letter code: MSKDTLEAIRFDKENVTLDILDQLLLPYESRYINIKSIQDAFEAIKSMQVRGAPAIAIVGAFAITVDTHLYLKSGETSKTVADLLNSIDYLVTSRPTAVNLANACNEIKALLVSHFEKSDLVTEKVWKLLFDYSVSLHEDDLRNNFKIGENGLRFISETLKAQNFKGPFSIVTVCNTGSLATSGHGTALGVIRTVHAQLSKSVSNEEFWFEHVYPLETRPYNQGAKLTTYELHYEKIPFTMICDNMVTSLISTLHKKKNIKGSAAPVKFIITGADRVVKNGDSANKIGTYQLAAIADFFNSTFTKEEDKIKFMVAAPNTTIDLKTETGDEIVIEERPAHELTSLKGPVLREDGSVGEKMTVGIATPGIQVWNPAFDVAPYQLIDCIVTEDEPFKKVDGKFSF.

Aspartate 275 functions as the Proton donor in the catalytic mechanism.

This sequence belongs to the eIF-2B alpha/beta/delta subunits family. MtnA subfamily.

It is found in the cytoplasm. The protein resides in the nucleus. The enzyme catalyses 5-(methylsulfanyl)-alpha-D-ribose 1-phosphate = 5-(methylsulfanyl)-D-ribulose 1-phosphate. It functions in the pathway amino-acid biosynthesis; L-methionine biosynthesis via salvage pathway; L-methionine from S-methyl-5-thio-alpha-D-ribose 1-phosphate: step 1/6. Its function is as follows. Catalyzes the interconversion of methylthioribose-1-phosphate (MTR-1-P) into methylthioribulose-1-phosphate (MTRu-1-P). This is Methylthioribose-1-phosphate isomerase from Clavispora lusitaniae (strain ATCC 42720) (Yeast).